We begin with the raw amino-acid sequence, 266 residues long: Ankyrin repeat domain-containing protein 45 (266 aa).

Composition is skewed to acidic residues over residues 1 to 11 (MESEGPPESES) and 18 to 32 (QEEE…EPEE). Residues 1-43 (MESEGPPESESSEFFSQQEEENEEEEAQEPEETGPKNPLLQPA) are disordered. ANK repeat units lie at residues 76–105 (VGRN…NLNE) and 109–138 (RGYT…DIEA).

It localises to the cytoplasm. It is found in the midbody. The protein resides in the midbody ring. Its subcellular location is the cleavage furrow. Functionally, may play a role during cell division. This is Ankyrin repeat domain-containing protein 45 from Homo sapiens (Human).